Reading from the N-terminus, the 383-residue chain is Lipid-A-disaccharide synthase (383 aa).

It belongs to the LpxB family.

It carries out the reaction a lipid X + a UDP-2-N,3-O-bis[(3R)-3-hydroxyacyl]-alpha-D-glucosamine = a lipid A disaccharide + UDP + H(+). Its pathway is bacterial outer membrane biogenesis; LPS lipid A biosynthesis. Its function is as follows. Condensation of UDP-2,3-diacylglucosamine and 2,3-diacylglucosamine-1-phosphate to form lipid A disaccharide, a precursor of lipid A, a phosphorylated glycolipid that anchors the lipopolysaccharide to the outer membrane of the cell. The protein is Lipid-A-disaccharide synthase of Syntrophus aciditrophicus (strain SB).